The chain runs to 422 residues: Adenylosuccinate synthetase (422 aa).

Residues 11-17 (GDEGKGK) and 39-41 (GHT) contribute to the GTP site. The active-site Proton acceptor is aspartate 12. Residues aspartate 12 and glycine 39 each coordinate Mg(2+). Residues 12–15 (DEGK), 37–40 (NAGH), threonine 129, arginine 143, asparagine 219, threonine 234, and arginine 298 contribute to the IMP site. Histidine 40 (proton donor) is an active-site residue. 294–300 (VTTGRRR) is a substrate binding site. GTP-binding positions include arginine 300, 326–328 (KLD), and 409–411 (GTG).

This sequence belongs to the adenylosuccinate synthetase family. In terms of assembly, homodimer. Mg(2+) serves as cofactor.

It is found in the cytoplasm. The catalysed reaction is IMP + L-aspartate + GTP = N(6)-(1,2-dicarboxyethyl)-AMP + GDP + phosphate + 2 H(+). Its pathway is purine metabolism; AMP biosynthesis via de novo pathway; AMP from IMP: step 1/2. In terms of biological role, plays an important role in the de novo pathway and in the salvage pathway of purine nucleotide biosynthesis. Catalyzes the first committed step in the biosynthesis of AMP from IMP. The polypeptide is Adenylosuccinate synthetase (Ajellomyces capsulatus (strain H143) (Darling's disease fungus)).